The primary structure comprises 369 residues: MTAQKGELRQGYTTGSCATAAARAALHLLLDGQMPERVSITLPDGGSAEFSPEAGRRDAAGASCCVRKDAGDDPDVTNGLLVCCRVALLDDEPEGHIEFCRGEGVGMVTLPGLGIDVGGPAINPVPRSMIREALGGLLDRYGLRCGVQVTVSVPGGEEVARKTLNARVGVKGGISIIGTSGRVIPYSEEAYLESIARTIRVARHSGSTHLVACAGARSEKLLRRMYPDLPETAFIHYGNRVGSTLDMIQHDGGFRNLTVGVMLAKATKLAQGELDLSSRTVGLNPQFIEHLVRKTGYAEDVALEAKALELVRSLVDIVPFSSSEPLYRALAESCRRVCRNRFPSGGLEFVLMTMQDGCILCDEHGCRDV.

It belongs to the CbiD family.

The enzyme catalyses Co-precorrin-5B + S-adenosyl-L-methionine = Co-precorrin-6A + S-adenosyl-L-homocysteine. Its pathway is cofactor biosynthesis; adenosylcobalamin biosynthesis; cob(II)yrinate a,c-diamide from sirohydrochlorin (anaerobic route): step 6/10. Functionally, catalyzes the methylation of C-1 in cobalt-precorrin-5B to form cobalt-precorrin-6A. In Prosthecochloris aestuarii (strain DSM 271 / SK 413), this protein is Cobalt-precorrin-5B C(1)-methyltransferase.